A 214-amino-acid polypeptide reads, in one-letter code: Probable nicotinate-nucleotide adenylyltransferase (214 aa).

This sequence belongs to the NadD family.

The catalysed reaction is nicotinate beta-D-ribonucleotide + ATP + H(+) = deamido-NAD(+) + diphosphate. The protein operates within cofactor biosynthesis; NAD(+) biosynthesis; deamido-NAD(+) from nicotinate D-ribonucleotide: step 1/1. Its function is as follows. Catalyzes the reversible adenylation of nicotinate mononucleotide (NaMN) to nicotinic acid adenine dinucleotide (NaAD). This chain is Probable nicotinate-nucleotide adenylyltransferase, found in Pseudomonas paraeruginosa (strain DSM 24068 / PA7) (Pseudomonas aeruginosa (strain PA7)).